Consider the following 227-residue polypeptide: Cytochrome c oxidase subunit 2 (227 aa).

The Mitochondrial intermembrane portion of the chain corresponds to methionine 1 to serine 14. A helical membrane pass occupies residues proline 15–methionine 45. Topologically, residues leucine 46 to glutamine 59 are mitochondrial matrix. Residues glutamate 60–methionine 87 form a helical membrane-spanning segment. Topologically, residues aspartate 88–isoleucine 227 are mitochondrial intermembrane. Residues histidine 161, cysteine 196, glutamate 198, cysteine 200, histidine 204, and methionine 207 each coordinate Cu cation. Mg(2+) is bound at residue glutamate 198.

Belongs to the cytochrome c oxidase subunit 2 family. In terms of assembly, component of the cytochrome c oxidase (complex IV, CIV), a multisubunit enzyme composed of 14 subunits. The complex is composed of a catalytic core of 3 subunits MT-CO1, MT-CO2 and MT-CO3, encoded in the mitochondrial DNA, and 11 supernumerary subunits COX4I, COX5A, COX5B, COX6A, COX6B, COX6C, COX7A, COX7B, COX7C, COX8 and NDUFA4, which are encoded in the nuclear genome. The complex exists as a monomer or a dimer and forms supercomplexes (SCs) in the inner mitochondrial membrane with NADH-ubiquinone oxidoreductase (complex I, CI) and ubiquinol-cytochrome c oxidoreductase (cytochrome b-c1 complex, complex III, CIII), resulting in different assemblies (supercomplex SCI(1)III(2)IV(1) and megacomplex MCI(2)III(2)IV(2)). Found in a complex with TMEM177, COA6, COX18, COX20, SCO1 and SCO2. Interacts with TMEM177 in a COX20-dependent manner. Interacts with COX20. Interacts with COX16. Cu cation is required as a cofactor.

It is found in the mitochondrion inner membrane. It carries out the reaction 4 Fe(II)-[cytochrome c] + O2 + 8 H(+)(in) = 4 Fe(III)-[cytochrome c] + 2 H2O + 4 H(+)(out). Its function is as follows. Component of the cytochrome c oxidase, the last enzyme in the mitochondrial electron transport chain which drives oxidative phosphorylation. The respiratory chain contains 3 multisubunit complexes succinate dehydrogenase (complex II, CII), ubiquinol-cytochrome c oxidoreductase (cytochrome b-c1 complex, complex III, CIII) and cytochrome c oxidase (complex IV, CIV), that cooperate to transfer electrons derived from NADH and succinate to molecular oxygen, creating an electrochemical gradient over the inner membrane that drives transmembrane transport and the ATP synthase. Cytochrome c oxidase is the component of the respiratory chain that catalyzes the reduction of oxygen to water. Electrons originating from reduced cytochrome c in the intermembrane space (IMS) are transferred via the dinuclear copper A center (CU(A)) of subunit 2 and heme A of subunit 1 to the active site in subunit 1, a binuclear center (BNC) formed by heme A3 and copper B (CU(B)). The BNC reduces molecular oxygen to 2 water molecules using 4 electrons from cytochrome c in the IMS and 4 protons from the mitochondrial matrix. The polypeptide is Cytochrome c oxidase subunit 2 (MT-CO2) (Leggadina forresti (Forrest's mouse)).